The sequence spans 39 residues: Fructose 5-dehydrogenase [NADP(+)] (39 aa).

It catalyses the reaction D-fructose + NADP(+) = 5-dehydro-D-fructose + NADPH + H(+). This chain is Fructose 5-dehydrogenase [NADP(+)], found in Erwinia citreus.